Reading from the N-terminus, the 323-residue chain is Olfactory receptor 51S1 (323 aa).

The Extracellular portion of the chain corresponds to 1–33; it reads MSTLPTQIAPNSSTSMAPTFLLVGMPGLSGAPS. An N-linked (GlcNAc...) asparagine glycan is attached at asparagine 11. The chain crosses the membrane as a helical span at residues 34-54; sequence WWTLPLIAVYLLSALGNGTIL. The Cytoplasmic portion of the chain corresponds to 55–62; it reads WIIALQPA. A helical transmembrane segment spans residues 63 to 83; it reads LHRPMHFFLFLLSVSDIGLVT. At 84 to 107 the chain is on the extracellular side; that stretch reads ALMPTLLGIALAGAHTVPASACLL. Cysteine 105 and cysteine 197 are disulfide-bonded. Residues 108–128 form a helical membrane-spanning segment; sequence QMVFIHVFSVMESSVLLAMSI. Residues 129-147 are Cytoplasmic-facing; that stretch reads DRALAICRPLHYPALLTNG. The chain crosses the membrane as a helical span at residues 148-168; sequence VISKISLAISFRCLGLHLPLP. The Extracellular portion of the chain corresponds to 169 to 203; that stretch reads FLLAYMPYCLPQVLTHSYCLHPDVARLACPEAWGA. A helical membrane pass occupies residues 204-224; sequence AYSLFVVLSAMGLDPLLIFFS. The Cytoplasmic portion of the chain corresponds to 225–244; that stretch reads YGLIGKVLQGVESREDRWKA. Residues 245–265 traverse the membrane as a helical segment; that stretch reads GQTCAAHLSAVLLFYIPMILL. Residues 266–280 lie on the Extracellular side of the membrane; that stretch reads ALINHPELPITQHTH. Residues 281 to 301 traverse the membrane as a helical segment; that stretch reads TLLSYVHFLLPPLINPILYSV. Residues 302-323 are Cytoplasmic-facing; it reads KMKEIRKRILNRLQPRKVGGAQ.

It belongs to the G-protein coupled receptor 1 family.

It is found in the cell membrane. Functionally, odorant receptor. This chain is Olfactory receptor 51S1 (OR51S1), found in Homo sapiens (Human).